Reading from the N-terminus, the 254-residue chain is Flavin-dependent thymidylate synthase (254 aa).

Positions 7–237 (LRVQLIAKTE…PAVFADFEIT (231 aa)) constitute a ThyX domain. DUMP contacts are provided by residues 92–95 (ELIR), 103–107 (QLSQR), and His-176. FAD is bound by residues 95-97 (RHR) and Gln-103. The ThyX motif signature appears at 95–105 (RHRHFSYSQLS). Residues 192 to 194 (NYR) and His-198 each bind FAD. Arg-203 is a dUMP binding site. The Involved in ionization of N3 of dUMP, leading to its activation role is filled by Arg-203.

This sequence belongs to the thymidylate synthase ThyX family. Homotetramer. FAD serves as cofactor.

It catalyses the reaction dUMP + (6R)-5,10-methylene-5,6,7,8-tetrahydrofolate + NADPH + H(+) = dTMP + (6S)-5,6,7,8-tetrahydrofolate + NADP(+). It functions in the pathway pyrimidine metabolism; dTTP biosynthesis. Its function is as follows. Catalyzes the reductive methylation of 2'-deoxyuridine-5'-monophosphate (dUMP) to 2'-deoxythymidine-5'-monophosphate (dTMP) while utilizing 5,10-methylenetetrahydrofolate (mTHF) as the methyl donor, and NADPH and FADH(2) as the reductant. In Mycobacterium leprae (strain Br4923), this protein is Flavin-dependent thymidylate synthase.